A 93-amino-acid polypeptide reads, in one-letter code: uncharacterized protein (93 aa).

Positions 24–85 (QLQVGDTLKL…IQTQVGRLFF (62 aa)) constitute a TRAM domain.

It belongs to the ycf81 family.

This is an uncharacterized protein from Thermus thermophilus.